The sequence spans 615 residues: DNA mismatch repair protein MutL (615 aa).

This sequence belongs to the DNA mismatch repair MutL/HexB family.

This protein is involved in the repair of mismatches in DNA. It is required for dam-dependent methyl-directed DNA mismatch repair. May act as a 'molecular matchmaker', a protein that promotes the formation of a stable complex between two or more DNA-binding proteins in an ATP-dependent manner without itself being part of a final effector complex. In Parabacteroides distasonis (strain ATCC 8503 / DSM 20701 / CIP 104284 / JCM 5825 / NCTC 11152), this protein is DNA mismatch repair protein MutL.